Reading from the N-terminus, the 306-residue chain is Tryptophan 2,3-dioxygenase (306 aa).

Residues 1 to 29 are disordered; it reads MQPPGDDAAPRCPFAGAHAPDAPHVPEAA. Substrate-binding positions include 75-79, Tyr137, and Arg141; that span reads FIIQH. His264 is a binding site for heme. Position 278 (Thr278) interacts with substrate.

The protein belongs to the tryptophan 2,3-dioxygenase family. Homotetramer. It depends on heme as a cofactor.

It carries out the reaction L-tryptophan + O2 = N-formyl-L-kynurenine. It functions in the pathway amino-acid degradation; L-tryptophan degradation via kynurenine pathway; L-kynurenine from L-tryptophan: step 1/2. Its function is as follows. Heme-dependent dioxygenase that catalyzes the oxidative cleavage of the L-tryptophan (L-Trp) pyrrole ring and converts L-tryptophan to N-formyl-L-kynurenine. Catalyzes the oxidative cleavage of the indole moiety. This is Tryptophan 2,3-dioxygenase from Burkholderia mallei (strain NCTC 10247).